A 101-amino-acid polypeptide reads, in one-letter code: Small ribosomal subunit protein bS6 (101 aa).

This sequence belongs to the bacterial ribosomal protein bS6 family.

Functionally, binds together with bS18 to 16S ribosomal RNA. This chain is Small ribosomal subunit protein bS6, found in Micrococcus luteus (strain ATCC 4698 / DSM 20030 / JCM 1464 / CCM 169 / CCUG 5858 / IAM 1056 / NBRC 3333 / NCIMB 9278 / NCTC 2665 / VKM Ac-2230) (Micrococcus lysodeikticus).